The sequence spans 132 residues: D-ribose pyranase (132 aa).

His-20 acts as the Proton donor in catalysis. Residues Asp-28, His-99, and 121–123 (YSN) each bind substrate.

Belongs to the RbsD / FucU family. RbsD subfamily. As to quaternary structure, homodecamer.

The protein resides in the cytoplasm. The catalysed reaction is beta-D-ribopyranose = beta-D-ribofuranose. The protein operates within carbohydrate metabolism; D-ribose degradation; D-ribose 5-phosphate from beta-D-ribopyranose: step 1/2. Catalyzes the interconversion of beta-pyran and beta-furan forms of D-ribose. This chain is D-ribose pyranase, found in Lactococcus lactis subsp. lactis (strain IL1403) (Streptococcus lactis).